A 767-amino-acid chain; its full sequence is Protein transport protein Sec23B (767 aa).

At A2 the chain carries N-acetylalanine. Zn(2+) contacts are provided by C61, C66, C85, and C88. N6-acetyllysine is present on K564. One copy of the Gelsolin-like repeat lies at 634 to 720 (PEPVLLDSSS…EHGGSQARFL (87 aa)).

Belongs to the SEC23/SEC24 family. SEC23 subfamily. In terms of assembly, COPII is composed of at least five proteins: the Sec23/24 complex, the Sec13/31 complex and Sar1. Interacts with SAR1A.

It localises to the cytoplasmic vesicle. The protein resides in the COPII-coated vesicle membrane. Its subcellular location is the endoplasmic reticulum membrane. The protein localises to the cytoplasm. It is found in the cytosol. In terms of biological role, component of the coat protein complex II (COPII) which promotes the formation of transport vesicles from the endoplasmic reticulum (ER). The coat has two main functions, the physical deformation of the endoplasmic reticulum membrane into vesicles and the selection of cargo molecules for their transport to the Golgi complex. The sequence is that of Protein transport protein Sec23B from Mus musculus (Mouse).